We begin with the raw amino-acid sequence, 488 residues long: Probable cytochrome P450 6u1 (488 aa).

Cysteine 430 serves as a coordination point for heme.

This sequence belongs to the cytochrome P450 family. The cofactor is heme.

It is found in the endoplasmic reticulum membrane. It localises to the microsome membrane. Functionally, may be involved in the metabolism of insect hormones and in the breakdown of synthetic insecticides. The protein is Probable cytochrome P450 6u1 (Cyp6u1) of Drosophila melanogaster (Fruit fly).